Here is a 767-residue protein sequence, read N- to C-terminus: Glucoamylase S1 (767 aa).

The N-terminal stretch at 1 to 21 (MQRPFLLAYLVLSLLFNSALG) is a signal peptide. 2 disordered regions span residues 29–83 (RGSS…ETTI) and 125–149 (TTTV…PTTP). Residues 30–48 (GSSSSNITSSGPSSTPFSS) are compositionally biased toward low complexity. Asn35 is a glycosylation site (N-linked (GlcNAc...) asparagine). A compositionally biased stretch (polar residues) spans 49-66 (ATESFSTGTTVTPSSSKY). Composition is skewed to low complexity over residues 71–83 (TETS…ETTI) and 131–149 (STSP…PTTP). N-linked (GlcNAc...) asparagine glycans are attached at residues Asn308, Asn322, Asn414, Asn423, and Asn434. A h subunit region spans residues 348–691 (VSIERIFENI…ASTTLYQLIY (344 aa)). Trp455 is a substrate binding site. Asn513 is a glycosylation site (N-linked (GlcNAc...) asparagine). The Proton acceptor role is filled by Asp518. Residue Glu521 is the Proton donor of the active site. N-linked (GlcNAc...) asparagine glycans are attached at residues Asn546, Asn645, Asn650, Asn720, and Asn741. The interval 692–767 (RHISEQHDLV…LKATWEQTGN (76 aa)) is y subunit.

This sequence belongs to the glycosyl hydrolase 15 family.

It carries out the reaction Hydrolysis of terminal (1-&gt;4)-linked alpha-D-glucose residues successively from non-reducing ends of the chains with release of beta-D-glucose.. The protein is Glucoamylase S1 (STA1) of Saccharomyces cerevisiae (Baker's yeast).